Consider the following 286-residue polypeptide: Ribosomal RNA small subunit methyltransferase A (286 aa).

The S-adenosyl-L-methionine site is built by Asn-28, Leu-30, Gly-55, Glu-77, Asp-103, and Asn-123.

Belongs to the class I-like SAM-binding methyltransferase superfamily. rRNA adenine N(6)-methyltransferase family. RsmA subfamily.

It localises to the cytoplasm. It catalyses the reaction adenosine(1518)/adenosine(1519) in 16S rRNA + 4 S-adenosyl-L-methionine = N(6)-dimethyladenosine(1518)/N(6)-dimethyladenosine(1519) in 16S rRNA + 4 S-adenosyl-L-homocysteine + 4 H(+). Functionally, specifically dimethylates two adjacent adenosines (A1518 and A1519) in the loop of a conserved hairpin near the 3'-end of 16S rRNA in the 30S particle. May play a critical role in biogenesis of 30S subunits. This Rhodopseudomonas palustris (strain BisB18) protein is Ribosomal RNA small subunit methyltransferase A.